Here is a 190-residue protein sequence, read N- to C-terminus: Elongation factor P-like protein (190 aa).

Belongs to the elongation factor P family.

In Pseudoalteromonas atlantica (strain T6c / ATCC BAA-1087), this protein is Elongation factor P-like protein.